A 229-amino-acid polypeptide reads, in one-letter code: MISLRIHEQPIHDQPRERLARQGAGALSDAELLAILLRVGTNGTNVLQLAQQLLAESGGLQGLQRLDFQELCRLHGMGVSKAASVKAALEIGRRLARSAIEERFPIRSPADVATLLLVEMSHLDQEHLRTILLDTKNRVQQITTVYIGSLNSANVRVGEVFKEAVRRNSAAIIVVHNHPSGEPTPSMEDIEITRQLVSAGRLLDIEVVDHLIIGNGRYVSLRERGLGFE.

The MPN domain occupies 105-227 (PIRSPADVAT…YVSLRERGLG (123 aa)). Zn(2+)-binding residues include His176, His178, and Asp189. The short motif at 176-189 (HNHPSGEPTPSMED) is the JAMM motif element.

This sequence belongs to the UPF0758 family.

In Chloroflexus aurantiacus (strain ATCC 29366 / DSM 635 / J-10-fl), this protein is UPF0758 protein Caur_3603.